Consider the following 311-residue polypeptide: Probable protein phosphatase 2C 59 (311 aa).

Over residues 1-14 the composition is skewed to low complexity; sequence MGYLNSVLSSSSQV. Residues 1-26 form a disordered region; sequence MGYLNSVLSSSSQVHSDDGPVSGGGL. The PPM-type phosphatase domain maps to 33 to 279; sequence SYGYASSPGK…DNITCVVVRF (247 aa). Residues aspartate 69, glycine 70, aspartate 231, and aspartate 270 each coordinate Mn(2+).

This sequence belongs to the PP2C family. In terms of assembly, interacts with the Pseudomonas syringae pv. maculicola effector HopW1-1 (via C-terminus). The cofactor is Mg(2+). Mn(2+) serves as cofactor.

It catalyses the reaction O-phospho-L-seryl-[protein] + H2O = L-seryl-[protein] + phosphate. The enzyme catalyses O-phospho-L-threonyl-[protein] + H2O = L-threonyl-[protein] + phosphate. With respect to regulation, inhibited by sodium fluoride (NaF). Functionally, protein phosphatase that modulates defense response to pathogenic bacteria, conferring resistance and promoting salicylic acid (SA) accumulation. The polypeptide is Probable protein phosphatase 2C 59 (WIN2) (Arabidopsis thaliana (Mouse-ear cress)).